A 388-amino-acid chain; its full sequence is MIVAGARTPVGKLMGSLKDFSGTDLGAIAIRAALEKANVPASMVEYVIMGQVLTAGAGQMPARQAAVAAGIPWDVAALSINKMCLSGIDAIALADQLIRAGEFDVIVAGGQESMSQAPHLLPKSREGYKYGDATLVDHLAYDGLHDVFTDQPMGALTEQRNDVDKFTRAEQDEYAAQSHQKAAAAWKDGVFADEVVPVSIPQRKGDPIEFAEDEGIRANTTAESLAGLKPAFRKDGTITAGSASQISDGAAAVIVMNKAKAEELGLTWLAEIGAHGVVAGPDSTLQSQPANAIKKAITREGITVDQLDVIEINEAFAAVALASTKELGVDPAKVNVNGGAIAIGHPIGMSGARIALHAALELARRGSGYAVAALCGAGGQGDALVLRR.

Cysteine 84 serves as the catalytic Acyl-thioester intermediate. Lysine 187 is covalently cross-linked (Isoglutamyl lysine isopeptide (Lys-Gln) (interchain with Q-Cter in protein Pup)). Active-site proton acceptor residues include histidine 345 and cysteine 375.

Belongs to the thiolase-like superfamily. Thiolase family.

The catalysed reaction is 2 acetyl-CoA = acetoacetyl-CoA + CoA. The protein is Probable acetyl-CoA acetyltransferase of Mycolicibacterium smegmatis (strain ATCC 700084 / mc(2)155) (Mycobacterium smegmatis).